Reading from the N-terminus, the 388-residue chain is Acetate kinase (388 aa).

Asn7 contributes to the Mg(2+) binding site. Residue Lys14 participates in ATP binding. Arg76 contributes to the substrate binding site. Asp133 serves as the catalytic Proton donor/acceptor. Residues 193–197 (HLGNG), 267–269 (DMR), and 315–319 (GIGEN) each bind ATP. Glu374 lines the Mg(2+) pocket.

It belongs to the acetokinase family. In terms of assembly, homodimer. Mg(2+) is required as a cofactor. The cofactor is Mn(2+).

It localises to the cytoplasm. It carries out the reaction acetate + ATP = acetyl phosphate + ADP. It functions in the pathway metabolic intermediate biosynthesis; acetyl-CoA biosynthesis; acetyl-CoA from acetate: step 1/2. Functionally, catalyzes the formation of acetyl phosphate from acetate and ATP. Can also catalyze the reverse reaction. The sequence is that of Acetate kinase from Micrococcus luteus (strain ATCC 4698 / DSM 20030 / JCM 1464 / CCM 169 / CCUG 5858 / IAM 1056 / NBRC 3333 / NCIMB 9278 / NCTC 2665 / VKM Ac-2230) (Micrococcus lysodeikticus).